Consider the following 259-residue polypeptide: Phosphatidylglycerol--prolipoprotein diacylglyceryl transferase (259 aa).

The next 4 membrane-spanning stretches (helical) occupy residues 9–29, 55–75, 92–112, and 117–137; these read IIFS…VIGI, FITY…VLLY, EGGM…YLFC, and INFL…LFLG. Residue Arg-138 coordinates a 1,2-diacyl-sn-glycero-3-phospho-(1'-sn-glycerol). The next 3 helical transmembrane spans lie at 172–192, 201–221, and 228–248; these read QLYE…YTTF, GLNS…IEIF, and IGFI…MLLL.

Belongs to the Lgt family.

It is found in the cell inner membrane. The enzyme catalyses L-cysteinyl-[prolipoprotein] + a 1,2-diacyl-sn-glycero-3-phospho-(1'-sn-glycerol) = an S-1,2-diacyl-sn-glyceryl-L-cysteinyl-[prolipoprotein] + sn-glycerol 1-phosphate + H(+). The protein operates within protein modification; lipoprotein biosynthesis (diacylglyceryl transfer). Its function is as follows. Catalyzes the transfer of the diacylglyceryl group from phosphatidylglycerol to the sulfhydryl group of the N-terminal cysteine of a prolipoprotein, the first step in the formation of mature lipoproteins. The protein is Phosphatidylglycerol--prolipoprotein diacylglyceryl transferase of Rickettsia conorii (strain ATCC VR-613 / Malish 7).